The following is a 799-amino-acid chain: Cadherin-8 (799 aa).

Residues methionine 1–methionine 29 form the signal peptide. The propeptide occupies alanine 30–arginine 61. 2 N-linked (GlcNAc...) asparagine glycosylation sites follow: asparagine 33 and asparagine 57. Cadherin domains follow at residues glycine 62 to phenylalanine 167, leucine 168 to phenylalanine 276, alanine 277 to phenylalanine 391, serine 392 to proline 494, and glutamate 495 to proline 616. The Extracellular portion of the chain corresponds to glycine 62 to methionine 621. An N-linked (GlcNAc...) asparagine glycan is attached at asparagine 188. 3 N-linked (GlcNAc...) asparagine glycosylation sites follow: asparagine 463, asparagine 473, and asparagine 544. The helical transmembrane segment at glycine 622–valine 642 threads the bilayer. Residues threonine 643–threonine 799 lie on the Cytoplasmic side of the membrane. Serine 795 carries the phosphoserine modification.

In terms of tissue distribution, mainly expressed in brain. Found in certain nerve cell lines, such as retinoblasts, glioma cells and neuroblasts.

It localises to the cell membrane. Cadherins are calcium-dependent cell adhesion proteins. They preferentially interact with themselves in a homophilic manner in connecting cells; cadherins may thus contribute to the sorting of heterogeneous cell types. The protein is Cadherin-8 (CDH8) of Homo sapiens (Human).